The sequence spans 1413 residues: ABC transporter G family member 33 (1413 aa).

Residues 1–10 (MGSSFRSSSS) are compositionally biased toward low complexity. Positions 1 to 21 (MGSSFRSSSSRNEHEDGGDEA) are disordered. Residues 11–21 (RNEHEDGGDEA) show a composition bias toward basic and acidic residues. One can recognise an ABC transporter 1 domain in the interval 140–412 (LKLSGVRTNE…FEECGFQCPE (273 aa)). 172 to 179 (GPPGCGKT) lines the ATP pocket. Positions 490 to 702 (ELFRACISRE…AEIGLSVNEF (213 aa)) constitute an ABC transmembrane type-2 1 domain. Helical transmembrane passes span 509–529 (VYLF…TVFI), 546–566 (CLFF…SMTV), 580–600 (FYPA…LSFF), 626–646 (FMIL…IAAI), 652–672 (AAMT…GFAI), and 738–758 (LSAL…ALSF). One can recognise an ABC transporter 2 domain in the interval 813 to 1065 (ITFQDLNYYV…CVIEYFQNIP (253 aa)). ATP is bound at residue 858–865 (GISGAGKT). The region spanning 1138–1352 (EQFKSCLWKM…TLNLFFSSQY (215 aa)) is the ABC transmembrane type-2 2 domain. 7 helical membrane-spanning segments follow: residues 1157-1177 (YNLM…LLFW), 1189-1209 (LFTV…NNCT), 1245-1265 (IPYI…MIGF), 1276-1296 (LYAM…LISI), 1302-1322 (VAAI…GFLI), 1330-1350 (WWVW…FFSS), and 1385-1405 (ITAI…AFFV).

This sequence belongs to the ABC transporter superfamily. ABCG family. PDR (TC 3.A.1.205) subfamily. As to expression, expressed in roots and stems.

The protein resides in the membrane. In terms of biological role, may be a general defense protein. The sequence is that of ABC transporter G family member 33 (ABCG33) from Arabidopsis thaliana (Mouse-ear cress).